A 237-amino-acid polypeptide reads, in one-letter code: Riboflavin kinase (237 aa).

The segment at 1–23 (MSLPNPDNRPLLIGPPTGPEAPF) is disordered. Mg(2+) is bound by residues T46 and N48. The segment at 82-126 (VLYQKPPTSEPVMMDPVQQQQQQQQQQRNQQQQQEGGVGSAQQEK) is disordered. Residues 99–115 (QQQQQQQQQQRNQQQQQ) are compositionally biased toward low complexity. E158 functions as the Nucleophile in the catalytic mechanism.

The protein belongs to the flavokinase family. The cofactor is Zn(2+). It depends on Mg(2+) as a cofactor.

It catalyses the reaction riboflavin + ATP = FMN + ADP + H(+). It functions in the pathway cofactor biosynthesis; FMN biosynthesis; FMN from riboflavin (ATP route): step 1/1. Functionally, catalyzes the phosphorylation of riboflavin (vitamin B2) to form flavin mononucleotide (FMN) coenzyme. The sequence is that of Riboflavin kinase (fmn1) from Neurospora crassa (strain ATCC 24698 / 74-OR23-1A / CBS 708.71 / DSM 1257 / FGSC 987).